Reading from the N-terminus, the 343-residue chain is Putative dihydroflavonol 4-reductase (343 aa).

Y150 is an NADP(+) binding site.

Belongs to the NAD(P)-dependent epimerase/dehydratase family. Dihydroflavonol-4-reductase subfamily.

The enzyme catalyses a (2R,3S,4S)-leucoanthocyanidin + NADP(+) = a (2R,3R)-dihydroflavonol + NADPH + H(+). It functions in the pathway secondary metabolite biosynthesis; flavonoid biosynthesis. In Synechocystis sp. (strain ATCC 27184 / PCC 6803 / Kazusa), this protein is Putative dihydroflavonol 4-reductase (dfrA).